Consider the following 447-residue polypeptide: Alliin lyase (447 aa).

The propeptide occupies 1–2; the sequence is QA. Residues 15-61 form the EGF-like; atypical domain; the sequence is EAVANINCSGHGRAFLDGILSDGSPKCECNTCYTGADCSQKITGCSA. Asparagine 21 carries an N-linked (GlcNAc...) asparagine glycan. Disulfide bonds link cysteine 22/cysteine 41, cysteine 43/cysteine 52, and cysteine 46/cysteine 59. 94-102 lines the chloride pocket; the sequence is YFFNPVSNF. Residues asparagine 148 and asparagine 193 are each glycosylated (N-linked (GlcNAc...) asparagine). Position 253 is an N6-(pyridoxal phosphate)lysine (lysine 253). Asparagine 330 carries N-linked (GlcNAc...) asparagine glycosylation. A disulfide bridge links cysteine 370 with cysteine 378.

It belongs to the alliinase family. In terms of assembly, homodimer. Pyridoxal 5'-phosphate is required as a cofactor.

It localises to the vacuole. The enzyme catalyses an S-alkyl-L-cysteine S-oxide = an S-alkyl sulfenate + 2-aminoprop-2-enoate. The polypeptide is Alliin lyase (Allium cepa var. aggregatum (Shallot)).